Consider the following 104-residue polypeptide: Large ribosomal subunit protein uL24 (104 aa).

This sequence belongs to the universal ribosomal protein uL24 family. Part of the 50S ribosomal subunit.

One of two assembly initiator proteins, it binds directly to the 5'-end of the 23S rRNA, where it nucleates assembly of the 50S subunit. Its function is as follows. One of the proteins that surrounds the polypeptide exit tunnel on the outside of the subunit. The chain is Large ribosomal subunit protein uL24 from Chelativorans sp. (strain BNC1).